The primary structure comprises 247 residues: ATP synthase subunit a, chloroplastic (247 aa).

The next 5 membrane-spanning stretches (helical) occupy residues 38–58 (QVLI…ILII), 95–115 (VPFI…GALL), 134–154 (INTT…AGLS), 199–219 (LVVV…VMFL), and 220–240 (GLFT…AYIG).

Belongs to the ATPase A chain family. In terms of assembly, F-type ATPases have 2 components, CF(1) - the catalytic core - and CF(0) - the membrane proton channel. CF(1) has five subunits: alpha(3), beta(3), gamma(1), delta(1), epsilon(1). CF(0) has four main subunits: a, b, b' and c.

It localises to the plastid. The protein resides in the chloroplast thylakoid membrane. Functionally, key component of the proton channel; it plays a direct role in the translocation of protons across the membrane. This Glycine max (Soybean) protein is ATP synthase subunit a, chloroplastic.